A 303-amino-acid chain; its full sequence is MQKFDTKTFQGLILTLQDYWARQGCTIIQPLDMEVGAGTSHPMTCLRALGPEPTAVAYVQPSRRPTDGRYGENPNRLQHYYQFQVIIKPSPDNIQELYLGSLKELGMDPTIHDIRFVEDNWENPTLGAWGLGWEVWLNGMEVTQFTYFQQVGGLECKPVTGEITYGLERLAMYIQGVDSVYDLVWSDGPLGKTTYGDVFHQNEVEQSTYNFEYADVDFLFTCFEQYEKEAQSLLALEKPLPLPAYERILKAAHSFNLLDARKAISVTERQRYILRIRTLTKAVAEAYYASREALGFPMCNNKK.

The protein belongs to the class-II aminoacyl-tRNA synthetase family. As to quaternary structure, tetramer of two alpha and two beta subunits.

The protein resides in the cytoplasm. The enzyme catalyses tRNA(Gly) + glycine + ATP = glycyl-tRNA(Gly) + AMP + diphosphate. This Erwinia tasmaniensis (strain DSM 17950 / CFBP 7177 / CIP 109463 / NCPPB 4357 / Et1/99) protein is Glycine--tRNA ligase alpha subunit.